We begin with the raw amino-acid sequence, 212 residues long: Peptide methionine sulfoxide reductase MsrA (212 aa).

Cys52 is a catalytic residue.

Belongs to the MsrA Met sulfoxide reductase family.

It catalyses the reaction L-methionyl-[protein] + [thioredoxin]-disulfide + H2O = L-methionyl-(S)-S-oxide-[protein] + [thioredoxin]-dithiol. The catalysed reaction is [thioredoxin]-disulfide + L-methionine + H2O = L-methionine (S)-S-oxide + [thioredoxin]-dithiol. Has an important function as a repair enzyme for proteins that have been inactivated by oxidation. Catalyzes the reversible oxidation-reduction of methionine sulfoxide in proteins to methionine. The protein is Peptide methionine sulfoxide reductase MsrA of Escherichia coli O6:K15:H31 (strain 536 / UPEC).